A 621-amino-acid chain; its full sequence is Chaperone protein dnaK (621 aa).

Residues 597 to 621 (VYSSTQQDNSKTEDGSVIDTNSKEA) form a disordered region.

The protein belongs to the heat shock protein 70 family.

The protein resides in the plastid. Its subcellular location is the chloroplast. Its function is as follows. Acts as a chaperone. This Gracilaria tenuistipitata var. liui (Red alga) protein is Chaperone protein dnaK.